Here is a 270-residue protein sequence, read N- to C-terminus: NADPH-dependent 7-cyano-7-deazaguanine reductase (270 aa).

A substrate-binding site is contributed by 79–81 (IES). 81–82 (SK) is an NADPH binding site. Cysteine 177 acts as the Thioimide intermediate in catalysis. Aspartate 184 acts as the Proton donor in catalysis. Position 216 to 217 (216 to 217 (HE)) interacts with substrate. 245-246 (RG) provides a ligand contact to NADPH.

This sequence belongs to the GTP cyclohydrolase I family. QueF type 2 subfamily. As to quaternary structure, homodimer.

It localises to the cytoplasm. It carries out the reaction 7-aminomethyl-7-carbaguanine + 2 NADP(+) = 7-cyano-7-deazaguanine + 2 NADPH + 3 H(+). The protein operates within tRNA modification; tRNA-queuosine biosynthesis. Functionally, catalyzes the NADPH-dependent reduction of 7-cyano-7-deazaguanine (preQ0) to 7-aminomethyl-7-deazaguanine (preQ1). In Acinetobacter baumannii (strain ATCC 17978 / DSM 105126 / CIP 53.77 / LMG 1025 / NCDC KC755 / 5377), this protein is NADPH-dependent 7-cyano-7-deazaguanine reductase.